An 81-amino-acid chain; its full sequence is Photosystem I iron-sulfur center (81 aa).

4Fe-4S ferredoxin-type domains follow at residues 2 to 31 and 39 to 68; these read AHSVKIYDTCIGCTQCVRACPTDVLEMVPW and IASAPRTEDCVGCKRCESACPTDFLSVRVY. C11, C14, C17, C21, C48, C51, C54, and C58 together coordinate [4Fe-4S] cluster.

As to quaternary structure, the eukaryotic PSI reaction center is composed of at least 11 subunits. [4Fe-4S] cluster serves as cofactor.

It is found in the plastid. The protein resides in the chloroplast thylakoid membrane. It carries out the reaction reduced [plastocyanin] + hnu + oxidized [2Fe-2S]-[ferredoxin] = oxidized [plastocyanin] + reduced [2Fe-2S]-[ferredoxin]. Functionally, apoprotein for the two 4Fe-4S centers FA and FB of photosystem I (PSI); essential for photochemical activity. FB is the terminal electron acceptor of PSI, donating electrons to ferredoxin. The C-terminus interacts with PsaA/B/D and helps assemble the protein into the PSI complex. Required for binding of PsaD and PsaE to PSI. PSI is a plastocyanin-ferredoxin oxidoreductase, converting photonic excitation into a charge separation, which transfers an electron from the donor P700 chlorophyll pair to the spectroscopically characterized acceptors A0, A1, FX, FA and FB in turn. This chain is Photosystem I iron-sulfur center, found in Physcomitrium patens (Spreading-leaved earth moss).